The sequence spans 191 residues: MTQQITLIKDKILSDNYFTLHNITYDLTRKDGEVIRHKREVYDRGNGATILLYNAKKKTVVLIRQFRVATWVNGNESGQLIETCAGLLDNDEPEVCIRKEAIEETGYEVGEVRKLFELYMSPGGVTELIHFFIAEYSDNQRANAGGGVEDEDIEVLELPFSQALEMIKTGEIRDGKTVLLLNYLQMSHLID.

GDP-alpha-D-mannose-binding positions include Tyr-17, 38–40, Arg-67, and 85–87; these read KRE and AGL. One can recognise a Nudix hydrolase domain in the interval 43–180; that stretch reads DRGNGATILL…EIRDGKTVLL (138 aa). Ala-85, Glu-100, and Glu-104 together coordinate Mg(2+). Residues 86-106 carry the Nudix box motif; the sequence is GLLDNDEPEVCIRKEAIEETG. GDP-alpha-D-mannose-binding positions include Glu-104, Glu-127, 150–151, and Lys-176; that span reads DE. Glu-151 is a binding site for Mg(2+).

Belongs to the Nudix hydrolase family. NudK subfamily. Homodimer. Requires Mg(2+) as cofactor.

It catalyses the reaction GDP-alpha-D-mannose + H2O = alpha-D-mannose 1-phosphate + GMP + 2 H(+). In terms of biological role, nucleoside diphosphate sugar hydrolase that hydrolyzes GDP-mannose as its preferred substrate, yielding GMP and mannose-1-phosphate. The polypeptide is GDP-mannose pyrophosphatase (nudK) (Shigella dysenteriae serotype 1 (strain Sd197)).